A 52-amino-acid chain; its full sequence is Sperm protamine P1 (52 aa).

The interval 1–27 (MARYSCCRSHSRSRSRRRRQRCRRRRR) is disordered. Basic residues predominate over residues 9–27 (SHSRSRSRRRRQRCRRRRR).

This sequence belongs to the protamine P1 family. In terms of tissue distribution, testis.

It localises to the nucleus. Its subcellular location is the chromosome. Functionally, protamines substitute for histones in the chromatin of sperm during the haploid phase of spermatogenesis. They compact sperm DNA into a highly condensed, stable and inactive complex. This is Sperm protamine P1 (PRM1) from Rhinolophus ferrumequinum (Greater horseshoe bat).